A 447-amino-acid chain; its full sequence is Ribosomal protein uS12 methylthiotransferase RimO (447 aa).

The MTTase N-terminal domain occupies 10 to 120 (PKVGFVSLGC…VVNAVHDVVP (111 aa)). Positions 19, 55, 84, 153, 157, and 160 each coordinate [4Fe-4S] cluster. The region spanning 139–377 (LTPRHYAYLK…MAHQQAISAA (239 aa)) is the Radical SAM core domain. The 68-residue stretch at 380–447 (QMKIGKEIEV…DEYDLWAEML (68 aa)) folds into the TRAM domain.

It belongs to the methylthiotransferase family. RimO subfamily. Requires [4Fe-4S] cluster as cofactor.

The protein localises to the cytoplasm. The enzyme catalyses L-aspartate(89)-[ribosomal protein uS12]-hydrogen + (sulfur carrier)-SH + AH2 + 2 S-adenosyl-L-methionine = 3-methylsulfanyl-L-aspartate(89)-[ribosomal protein uS12]-hydrogen + (sulfur carrier)-H + 5'-deoxyadenosine + L-methionine + A + S-adenosyl-L-homocysteine + 2 H(+). Its function is as follows. Catalyzes the methylthiolation of an aspartic acid residue of ribosomal protein uS12. This Pseudomonas syringae pv. syringae (strain B728a) protein is Ribosomal protein uS12 methylthiotransferase RimO.